Consider the following 284-residue polypeptide: Release factor glutamine methyltransferase (284 aa).

Residues Gly123 to Gly127, Asp146, Trp174, and Asn189 contribute to the S-adenosyl-L-methionine site. Position 189–192 (Asn189–Tyr192) interacts with substrate.

Belongs to the protein N5-glutamine methyltransferase family. PrmC subfamily.

The catalysed reaction is L-glutaminyl-[peptide chain release factor] + S-adenosyl-L-methionine = N(5)-methyl-L-glutaminyl-[peptide chain release factor] + S-adenosyl-L-homocysteine + H(+). Functionally, methylates the class 1 translation termination release factors RF1/PrfA and RF2/PrfB on the glutamine residue of the universally conserved GGQ motif. The sequence is that of Release factor glutamine methyltransferase from Francisella tularensis subsp. tularensis (strain SCHU S4 / Schu 4).